A 579-amino-acid chain; its full sequence is Laccase-24 (579 aa).

The first 23 residues, 1–23 (MARSWSLLLLPFALALVASVAQA), serve as a signal peptide directing secretion. 2 consecutive Plastocyanin-like domains span residues 31–148 (NVGN…PRGG) and 159–322 (EEVV…YGGG). 2 N-linked (GlcNAc...) asparagine glycosylation sites follow: Asn34 and Asn78. Cu cation is bound by residues His82 and His84. Asn110 and Asn116 each carry an N-linked (GlcNAc...) asparagine glycan. Residues His127 and His129 each contribute to the Cu cation site. Residues Asn204, Asn209, Asn219, Asn241, Asn312, Asn337, Asn348, Asn398, Asn405, Asn444, and Asn462 are each glycosylated (N-linked (GlcNAc...) asparagine). Residues 425-563 (DFPDTPPIVF…GMVFEVQNGP (139 aa)) form the Plastocyanin-like 3 domain. The Cu cation site is built by His480, His483, and His485. N-linked (GlcNAc...) asparagine glycosylation is present at Asn500. Residues His542, Cys543, His544, and His548 each contribute to the Cu cation site.

The protein belongs to the multicopper oxidase family. Requires Cu cation as cofactor.

It localises to the secreted. The protein resides in the extracellular space. Its subcellular location is the apoplast. It carries out the reaction 4 hydroquinone + O2 = 4 benzosemiquinone + 2 H2O. Functionally, lignin degradation and detoxification of lignin-derived products. The protein is Laccase-24 (LAC24) of Oryza sativa subsp. japonica (Rice).